Here is a 260-residue protein sequence, read N- to C-terminus: Acetylglutamate kinase (260 aa).

Substrate contacts are provided by residues 46 to 47, Arg-68, and Asn-160; that span reads GG.

Belongs to the acetylglutamate kinase family. ArgB subfamily.

It localises to the cytoplasm. It carries out the reaction N-acetyl-L-glutamate + ATP = N-acetyl-L-glutamyl 5-phosphate + ADP. The protein operates within amino-acid biosynthesis; L-arginine biosynthesis; N(2)-acetyl-L-ornithine from L-glutamate: step 2/4. Functionally, catalyzes the ATP-dependent phosphorylation of N-acetyl-L-glutamate. The chain is Acetylglutamate kinase from Shewanella sp. (strain MR-4).